A 908-amino-acid polypeptide reads, in one-letter code: AdoMet-dependent rRNA methyltransferase SPB1 (908 aa).

Residues Gly57, Trp59, Asp77, Asp93, and Asp118 each coordinate S-adenosyl-L-methionine. Lys158 (proton acceptor) is an active-site residue. Positions 378–422 form a coiled coil; that stretch reads MDEEEQITEELQKLQQAKLAKTKRERKRANEKKARELLKLQLNMT. Disordered regions lie at residues 440-513, 535-715, and 806-841; these read IFDL…YDSY, NFDA…DEVK, and AKGR…EKAR. Positions 464 to 493 are enriched in acidic residues; the sequence is DDGEGMDLASESEEEEDEDEEDDEVLDSDE. Basic and acidic residues predominate over residues 535-545; the sequence is NFDAWHGIQEK. Acidic residues-rich tracts occupy residues 546–564 and 579–591; these read SDEE…EEGG and DSSD…EPET. Over residues 592-610 the composition is skewed to basic and acidic residues; that stretch reads EVPKKIKKVSFEKPARSEK. Composition is skewed to acidic residues over residues 650-678 and 685-712; these read DGDD…EDAS and EGDD…EDQD. Basic and acidic residues predominate over residues 816-827; that stretch reads ARMEKAKKKADG.

Belongs to the class I-like SAM-binding methyltransferase superfamily. RNA methyltransferase RlmE family. SPB1 subfamily. Component of the nucleolar and nucleoplasmic pre-60S ribosomal particle.

The protein resides in the nucleus. The protein localises to the nucleolus. The catalysed reaction is a ribonucleotide in rRNA + S-adenosyl-L-methionine = a 2'-O-methylribonucleotide in rRNA + S-adenosyl-L-homocysteine + H(+). Required for proper assembly of pre-ribosomal particles during the biogenesis of the 60S ribosomal subunit. The polypeptide is AdoMet-dependent rRNA methyltransferase SPB1 (Cryptococcus neoformans var. neoformans serotype D (strain B-3501A) (Filobasidiella neoformans)).